We begin with the raw amino-acid sequence, 97 residues long: Essential MCU regulator, mitochondrial (97 aa).

A mitochondrion-targeting transit peptide spans 1–37 (MAARMGVLSVAGFRAAARAGGLLARPKQSTAVVPCRT). The Mitochondrial matrix segment spans residues 38–55 (VIASSAGAILPKPEKVSF). The helical transmembrane segment at 56–75 (GLLRVFTVVIPFLYIGTLIS) threads the bilayer. Residues 76–97 (KNFAAVLEEHDIFVPEDDDDDD) are Mitochondrial intermembrane-facing.

It belongs to the SMDT1/EMRE family. As to quaternary structure, component of the uniplex complex.

It is found in the mitochondrion inner membrane. In terms of biological role, essential regulatory subunit of the mitochondrial calcium uniporter complex (uniplex), a complex that mediates calcium uptake into mitochondria. Required to bridge the calcium-sensing proteins micu1 with the calcium-conducting subunit mcu. Acts by mediating activation of mcu and retention of micu1 to the mcu pore, in order to ensure tight regulation of the uniplex complex and appropriate responses to intracellular calcium signaling. The polypeptide is Essential MCU regulator, mitochondrial (Xenopus laevis (African clawed frog)).